Here is a 342-residue protein sequence, read N- to C-terminus: Ketol-acid reductoisomerase (NADP(+)) (342 aa).

The KARI N-terminal Rossmann domain maps to Val2–Thr181. Residues Tyr25 to Gln28, Arg48, Ser52, and Asp82 to Gln85 contribute to the NADP(+) site. His107 is an active-site residue. NADP(+) is bound at residue Gly133. The KARI C-terminal knotted domain maps to Thr182–Val327. 4 residues coordinate Mg(2+): Asp190, Glu194, Glu226, and Glu230. Residue Ser251 participates in substrate binding.

Belongs to the ketol-acid reductoisomerase family. Requires Mg(2+) as cofactor.

The catalysed reaction is (2R)-2,3-dihydroxy-3-methylbutanoate + NADP(+) = (2S)-2-acetolactate + NADPH + H(+). It carries out the reaction (2R,3R)-2,3-dihydroxy-3-methylpentanoate + NADP(+) = (S)-2-ethyl-2-hydroxy-3-oxobutanoate + NADPH + H(+). It participates in amino-acid biosynthesis; L-isoleucine biosynthesis; L-isoleucine from 2-oxobutanoate: step 2/4. It functions in the pathway amino-acid biosynthesis; L-valine biosynthesis; L-valine from pyruvate: step 2/4. Its function is as follows. Involved in the biosynthesis of branched-chain amino acids (BCAA). Catalyzes an alkyl-migration followed by a ketol-acid reduction of (S)-2-acetolactate (S2AL) to yield (R)-2,3-dihydroxy-isovalerate. In the isomerase reaction, S2AL is rearranged via a Mg-dependent methyl migration to produce 3-hydroxy-3-methyl-2-ketobutyrate (HMKB). In the reductase reaction, this 2-ketoacid undergoes a metal-dependent reduction by NADPH to yield (R)-2,3-dihydroxy-isovalerate. The polypeptide is Ketol-acid reductoisomerase (NADP(+)) (Bacillus subtilis (strain 168)).